The chain runs to 366 residues: Aliphatic nitrilase (366 aa).

One can recognise a CN hydrolase domain in the interval 8 to 282 (FKVAAVQAQP…EGILYADIDL (275 aa)). Glutamate 48 acts as the Proton acceptor in catalysis. The Proton donor role is filled by lysine 131. Catalysis depends on cysteine 165, which acts as the Nucleophile. The segment at 346–366 (DEQRALPSTHSDETDRATASI) is disordered. A compositionally biased stretch (basic and acidic residues) spans 355–366 (HSDETDRATASI).

This sequence belongs to the carbon-nitrogen hydrolase superfamily. Nitrilase family. In terms of assembly, homodimer.

The catalysed reaction is an aliphatic nitrile + 2 H2O = a carboxylate + NH4(+). The protein is Aliphatic nitrilase (nitA) of Rhodococcus rhodochrous.